Here is a 218-residue protein sequence, read N- to C-terminus: Hypoxanthine-guanine phosphoribosyltransferase (218 aa).

An N-acetylalanine modification is found at Ala2. Lys69 serves as a coordination point for GMP. An N6-acetyllysine modification is found at Lys103. A Glycyl lysine isopeptide (Lys-Gly) (interchain with G-Cter in SUMO1); alternate cross-link involves residue Lys115. Lys115 is covalently cross-linked (Glycyl lysine isopeptide (Lys-Gly) (interchain with G-Cter in SUMO2); alternate). GMP contacts are provided by residues 134 to 142 (EDIIDTGKT), Lys166, 186 to 188 (KFV), and Asp194. The active-site Proton acceptor is the Asp138. Phosphothreonine is present on Thr142. Residue Asp194 coordinates Mg(2+).

Belongs to the purine/pyrimidine phosphoribosyltransferase family. As to quaternary structure, homotetramer. The cofactor is Mg(2+).

The protein localises to the cytoplasm. It catalyses the reaction IMP + diphosphate = hypoxanthine + 5-phospho-alpha-D-ribose 1-diphosphate. The enzyme catalyses GMP + diphosphate = guanine + 5-phospho-alpha-D-ribose 1-diphosphate. Its pathway is purine metabolism; IMP biosynthesis via salvage pathway; IMP from hypoxanthine: step 1/1. In terms of biological role, converts guanine to guanosine monophosphate, and hypoxanthine to inosine monophosphate. Transfers the 5-phosphoribosyl group from 5-phosphoribosylpyrophosphate onto the purine. Plays a central role in the generation of purine nucleotides through the purine salvage pathway. This Cricetulus griseus (Chinese hamster) protein is Hypoxanthine-guanine phosphoribosyltransferase (HPRT1).